A 120-amino-acid polypeptide reads, in one-letter code: Holo-[acyl-carrier-protein] synthase (120 aa).

The Mg(2+) site is built by aspartate 8 and glutamate 58.

The protein belongs to the P-Pant transferase superfamily. AcpS family. Mg(2+) serves as cofactor.

The protein resides in the cytoplasm. The enzyme catalyses apo-[ACP] + CoA = holo-[ACP] + adenosine 3',5'-bisphosphate + H(+). In terms of biological role, transfers the 4'-phosphopantetheine moiety from coenzyme A to a Ser of acyl-carrier-protein. This chain is Holo-[acyl-carrier-protein] synthase, found in Anoxybacillus flavithermus (strain DSM 21510 / WK1).